We begin with the raw amino-acid sequence, 154 residues long: Aspartate carbamoyltransferase regulatory chain (154 aa).

Zn(2+)-binding residues include Cys-110, Cys-115, Cys-136, and Cys-139.

It belongs to the PyrI family. Contains catalytic and regulatory chains. The cofactor is Zn(2+).

Involved in allosteric regulation of aspartate carbamoyltransferase. This Halobacterium salinarum (strain ATCC 700922 / JCM 11081 / NRC-1) (Halobacterium halobium) protein is Aspartate carbamoyltransferase regulatory chain.